Reading from the N-terminus, the 298-residue chain is 33 kDa chaperonin (298 aa).

2 disulfide bridges follow: Cys239/Cys241 and Cys272/Cys275.

This sequence belongs to the HSP33 family. Post-translationally, under oxidizing conditions two disulfide bonds are formed involving the reactive cysteines. Under reducing conditions zinc is bound to the reactive cysteines and the protein is inactive.

It is found in the cytoplasm. Functionally, redox regulated molecular chaperone. Protects both thermally unfolding and oxidatively damaged proteins from irreversible aggregation. Plays an important role in the bacterial defense system toward oxidative stress. The sequence is that of 33 kDa chaperonin from Picosynechococcus sp. (strain ATCC 27264 / PCC 7002 / PR-6) (Agmenellum quadruplicatum).